The sequence spans 89 residues: Large ribosomal subunit protein bL31B (89 aa).

This sequence belongs to the bacterial ribosomal protein bL31 family. Type B subfamily. As to quaternary structure, part of the 50S ribosomal subunit.

In Actinobacillus pleuropneumoniae serotype 5b (strain L20), this protein is Large ribosomal subunit protein bL31B.